The sequence spans 248 residues: Triosephosphate isomerase (248 aa).

The substrate site is built by asparagine 12 and lysine 14. Positions 16–30 (NGDRAGIDSIISFMK) are igE-binding. Histidine 95 (electrophile) is an active-site residue. The Proton acceptor role is filled by glutamate 165. IgE-binding stretches follow at residues 166-180 (PVWAIGTGKTATPEQ) and 205-219 (RIIYGGSVTPGNCKE).

The protein belongs to the triosephosphate isomerase family. As to quaternary structure, homodimer. In terms of tissue distribution, expressed in skeletal muscle (at protein level).

It localises to the cytoplasm. The catalysed reaction is D-glyceraldehyde 3-phosphate = dihydroxyacetone phosphate. It carries out the reaction dihydroxyacetone phosphate = methylglyoxal + phosphate. It functions in the pathway carbohydrate biosynthesis; gluconeogenesis. It participates in carbohydrate degradation; glycolysis; D-glyceraldehyde 3-phosphate from glycerone phosphate: step 1/1. Triosephosphate isomerase is an extremely efficient metabolic enzyme that catalyzes the interconversion between dihydroxyacetone phosphate (DHAP) and D-glyceraldehyde-3-phosphate (G3P) in glycolysis and gluconeogenesis. In terms of biological role, it is also responsible for the non-negligible production of methylglyoxal a reactive cytotoxic side-product that modifies and can alter proteins, DNA and lipids. The sequence is that of Triosephosphate isomerase from Procambarus clarkii (Red swamp crayfish).